A 305-amino-acid polypeptide reads, in one-letter code: Orotidine 5'-phosphate decarboxylase (305 aa).

Residue Lys108 is the Proton donor of the active site.

This sequence belongs to the OMP decarboxylase family. Type 2 subfamily.

It catalyses the reaction orotidine 5'-phosphate + H(+) = UMP + CO2. It functions in the pathway pyrimidine metabolism; UMP biosynthesis via de novo pathway; UMP from orotate: step 2/2. The chain is Orotidine 5'-phosphate decarboxylase from Caldicellulosiruptor bescii (strain ATCC BAA-1888 / DSM 6725 / KCTC 15123 / Z-1320) (Anaerocellum thermophilum).